We begin with the raw amino-acid sequence, 474 residues long: Tubulin gamma-1 chain (474 aa).

142-148 is a GTP binding site; that stretch reads AGGTGSG.

Belongs to the tubulin family. As to quaternary structure, gamma-tubulin complex is composed of gamma-tubulin and GCP proteins.

It is found in the cytoplasm. The protein resides in the cytoskeleton. It localises to the microtubule organizing center. The protein localises to the nucleus. Its subcellular location is the cell cortex. Tubulin is the major constituent of microtubules. The gamma chain is found at microtubule organizing centers (MTOC) such as the spindle poles, suggesting that it is involved in the minus-end nucleation of microtubule assembly. Its function is as follows. Gamma-tubulin complex is essential for the control of microtubular network remodeling in the course of initiation and development of giant-feeding cells, and for the successful reproduction of nematodes (e.g. Meloidogyne spp.) in their plant hosts. The chain is Tubulin gamma-1 chain (TUBG1) from Arabidopsis thaliana (Mouse-ear cress).